Here is a 258-residue protein sequence, read N- to C-terminus: Triosephosphate isomerase (258 aa).

11 to 13 (NWK) serves as a coordination point for substrate. His101 serves as the catalytic Electrophile. Catalysis depends on Glu173, which acts as the Proton acceptor. Substrate is bound by residues Gly179, Ser219, and 240-241 (GG).

This sequence belongs to the triosephosphate isomerase family. Homodimer.

It is found in the cytoplasm. The enzyme catalyses D-glyceraldehyde 3-phosphate = dihydroxyacetone phosphate. Its pathway is carbohydrate biosynthesis; gluconeogenesis. The protein operates within carbohydrate degradation; glycolysis; D-glyceraldehyde 3-phosphate from glycerone phosphate: step 1/1. Its function is as follows. Involved in the gluconeogenesis. Catalyzes stereospecifically the conversion of dihydroxyacetone phosphate (DHAP) to D-glyceraldehyde-3-phosphate (G3P). This chain is Triosephosphate isomerase, found in Streptomyces coelicolor (strain ATCC BAA-471 / A3(2) / M145).